A 122-amino-acid chain; its full sequence is Large ribosomal subunit protein uL14 (122 aa).

The protein belongs to the universal ribosomal protein uL14 family. Part of the 50S ribosomal subunit. Forms a cluster with proteins L3 and L19. In the 70S ribosome, L14 and L19 interact and together make contacts with the 16S rRNA in bridges B5 and B8.

In terms of biological role, binds to 23S rRNA. Forms part of two intersubunit bridges in the 70S ribosome. The polypeptide is Large ribosomal subunit protein uL14 (Moorella thermoacetica (strain ATCC 39073 / JCM 9320)).